The sequence spans 248 residues: MDPTRGLCALSTHDLAKFHSLPPARKAAGKRAHLRCYSKLLSLKSWEQLASFLSLPPGPTFTDFRLFFEVTLGRRIADCVVVALQPYPRCYIVEFKTAMSNTANPQSVTRKAQRLEGTAQLCDCANFLRTSCPPVLGSQGLEVLAALVFKNQRSLRTLQVEFPALGQKTLPTSTTGLLNLLSRWQDGALRARLDRPRPTAQGHRPRTHVGPKPSQLTARVPRSARAGRAGGRKGQVGAVGQVCPGAQK.

The segment at 194-248 (DRPRPTAQGHRPRTHVGPKPSQLTARVPRSARAGRAGGRKGQVGAVGQVCPGAQK) is disordered. The span at 218-227 (ARVPRSARAG) shows a compositional bias: low complexity.

The protein belongs to the herpesviridae UL24 family.

The protein resides in the virion. Its subcellular location is the host cytoplasm. The protein localises to the host nucleus. It is found in the host nucleolus. It localises to the host Golgi apparatus. Functionally, may participate in nuclear egress of viral particles. Plays a role in the dispersal of several host nucleolar proteins including NCL/nucleolin and NPM1. Since deletion of host NCL/nucleolin negatively impact on nuclear egress, UL24 supposedly acts on this process through its effect on host nucleoli. This Homo sapiens (Human) protein is Protein UL24 homolog.